The primary structure comprises 394 residues: tRNA-specific 2-thiouridylase MnmA (394 aa).

ATP contacts are provided by residues 30 to 37 (AMSGGVDS) and Leu-56. Catalysis depends on Cys-124, which acts as the Nucleophile. A disulfide bond links Cys-124 and Cys-220. Gly-148 is a binding site for ATP. Positions 170-172 (RDQ) are interaction with tRNA. Cys-220 serves as the catalytic Cysteine persulfide intermediate.

The protein belongs to the MnmA/TRMU family.

The protein resides in the cytoplasm. The enzyme catalyses S-sulfanyl-L-cysteinyl-[protein] + uridine(34) in tRNA + AH2 + ATP = 2-thiouridine(34) in tRNA + L-cysteinyl-[protein] + A + AMP + diphosphate + H(+). Functionally, catalyzes the 2-thiolation of uridine at the wobble position (U34) of tRNA, leading to the formation of s(2)U34. The polypeptide is tRNA-specific 2-thiouridylase MnmA (Hyphomonas neptunium (strain ATCC 15444)).